A 1148-amino-acid chain; its full sequence is Trafficking protein particle complex subunit 9 (1148 aa).

A phosphoserine mark is found at Ser566 and Ser953.

This sequence belongs to the NIBP family. As to quaternary structure, component of the multisubunit TRAPP (transport protein particle) complex, which includes at least TRAPPC2, TRAPPC2L, TRAPPC3, TRAPPC3L, TRAPPC4, TRAPPC5, TRAPPC8, TRAPPC9, TRAPPC10, TRAPPC11 and TRAPPC12. Directly interacts with IKBKB and MAP3K14. As to expression, expressed at high levels in muscle and kidney and to a lower extent in brain, heart and placenta.

The protein resides in the golgi apparatus. Its subcellular location is the cis-Golgi network. The protein localises to the endoplasmic reticulum. It is found in the cytoplasm. In terms of biological role, functions as an activator of NF-kappa-B through increased phosphorylation of the IKK complex. May function in neuronal cells differentiation. May play a role in vesicular transport from endoplasmic reticulum to Golgi. The sequence is that of Trafficking protein particle complex subunit 9 (TRAPPC9) from Homo sapiens (Human).